The chain runs to 162 residues: Putative pre-16S rRNA nuclease (162 aa).

This sequence belongs to the YqgF nuclease family.

The protein resides in the cytoplasm. Its function is as follows. Could be a nuclease involved in processing of the 5'-end of pre-16S rRNA. The protein is Putative pre-16S rRNA nuclease of Brucella abortus (strain S19).